We begin with the raw amino-acid sequence, 356 residues long: Protein-arginine kinase (356 aa).

Residues 24 to 256 (IIISSRVRVA…RQILAQEQAA (233 aa)) form the Phosphagen kinase C-terminal domain. ATP contacts are provided by residues 27 to 31 (SSRVR), His93, Arg127, 178 to 182 (RASVM), and 209 to 214 (RGLYGE). Positions 339–344 (RDIFRA) match the RDXXRA motif of the pArg binding pocket involved in allosteric regulation motif.

It belongs to the ATP:guanido phosphotransferase family.

It carries out the reaction L-arginyl-[protein] + ATP = N(omega)-phospho-L-arginyl-[protein] + ADP + H(+). Its activity is regulated as follows. Appears to be allosterically activated by the binding of pArg-containing polypeptides to the pArg-binding pocket localized in the C-terminal domain of McsB. In terms of biological role, catalyzes the specific phosphorylation of arginine residues in proteins. This Pelotomaculum thermopropionicum (strain DSM 13744 / JCM 10971 / SI) protein is Protein-arginine kinase.